Here is a 206-residue protein sequence, read N- to C-terminus: Small ribosomal subunit protein uS4 (206 aa).

The region spanning 96-158 (GRLDNVVYRM…AKKQSRIKAA (63 aa)) is the S4 RNA-binding domain.

Belongs to the universal ribosomal protein uS4 family. Part of the 30S ribosomal subunit. Contacts protein S5. The interaction surface between S4 and S5 is involved in control of translational fidelity.

One of the primary rRNA binding proteins, it binds directly to 16S rRNA where it nucleates assembly of the body of the 30S subunit. Its function is as follows. With S5 and S12 plays an important role in translational accuracy. The sequence is that of Small ribosomal subunit protein uS4 from Vibrio cholerae serotype O1 (strain ATCC 39541 / Classical Ogawa 395 / O395).